The primary structure comprises 390 residues: Elongation factor Ts, mitochondrial (390 aa).

The protein belongs to the EF-Ts family.

The protein localises to the mitochondrion. Its function is as follows. Associates with the EF-Tu.GDP complex and induces the exchange of GDP to GTP. It remains bound to the aminoacyl-tRNA.EF-Tu.GTP complex up to the GTP hydrolysis stage on the ribosome. The sequence is that of Elongation factor Ts, mitochondrial from Plasmodium vivax (strain Salvador I).